Reading from the N-terminus, the 193-residue chain is tRNA (cytidine(56)-2'-O)-methyltransferase (193 aa).

Residues Leu-86 and 115 to 119 each bind S-adenosyl-L-methionine; that span reads GGEKV.

Belongs to the aTrm56 family. Homodimer.

It is found in the cytoplasm. It catalyses the reaction cytidine(56) in tRNA + S-adenosyl-L-methionine = 2'-O-methylcytidine(56) in tRNA + S-adenosyl-L-homocysteine + H(+). Functionally, specifically catalyzes the AdoMet-dependent 2'-O-ribose methylation of cytidine at position 56 in tRNAs. The polypeptide is tRNA (cytidine(56)-2'-O)-methyltransferase (Haloquadratum walsbyi (strain DSM 16790 / HBSQ001)).